We begin with the raw amino-acid sequence, 635 residues long: 1-deoxy-D-xylulose-5-phosphate synthase (635 aa).

Residues His79 and 120-122 (GHS) contribute to the thiamine diphosphate site. Asp151 serves as a coordination point for Mg(2+). Thiamine diphosphate contacts are provided by residues 152 to 153 (GA), Asn182, Tyr290, and Glu372. Asn182 is a Mg(2+) binding site.

This sequence belongs to the transketolase family. DXPS subfamily. Homodimer. Mg(2+) is required as a cofactor. The cofactor is thiamine diphosphate.

It catalyses the reaction D-glyceraldehyde 3-phosphate + pyruvate + H(+) = 1-deoxy-D-xylulose 5-phosphate + CO2. The protein operates within metabolic intermediate biosynthesis; 1-deoxy-D-xylulose 5-phosphate biosynthesis; 1-deoxy-D-xylulose 5-phosphate from D-glyceraldehyde 3-phosphate and pyruvate: step 1/1. Catalyzes the acyloin condensation reaction between C atoms 2 and 3 of pyruvate and glyceraldehyde 3-phosphate to yield 1-deoxy-D-xylulose-5-phosphate (DXP). The chain is 1-deoxy-D-xylulose-5-phosphate synthase from Stenotrophomonas maltophilia (strain K279a).